Here is a 1326-residue protein sequence, read N- to C-terminus: MNRRYALSLSGALLASSCMTVLVAVPVARAQQASTAVTSTAASPAAAPRQILLQQARFWLQQQQYDNARQALQNAQRIAPDAPDVLEVEGEYQAAVGNREAAADTLRHLQQVAPASTAVSNLSDLLSERAISQSDLSQIRSLAGSGQNAQAVAGYQKLFHGGKPPRSLAVEYYQTMAGVPTQWDQARAGLAGIVASNPQNYRAQLAFAQALTYNTSTRMEGLTRLKDLQSFQSQAPVEAAAATQSYRQTLSWLPVNPDTQPLMEQWLSAHPNDAALREHMLHPPGGPPDKAGLARQAGYQQLNAGRLSAAEQSFQSALQINSHDADSLGGMGLVSMRQGDTAEAHRYFEEAMAADPKTADRWRPALAGMAVSGDYAAVRQLIAAHQYTEAKQKLATLARQPGQYTGATLMLADLQRSTGQVAAAEQEYRGILSREPNNQLALMGLARVDMAQGNTAEARQLLSRVSPQYASQVGEIEVSGLMAAASQTSDSARKVSILREAMAQAPRDPWVRINLANALQQQGDVAEAGRVMQPILANPVTAQDRQAGILYTYGSGNDAMTRQLLAGLSPADYSPAIRSIAEEMEIKQDLASRLSMVSNPVPLIREALSQPDPTGARGVAVADLFRQRGDMVHARMALRIASTRTIDLSPDQRLSYATEYMKISNPVAAARLLAPLGDGTGSGAGNALLPEQMQTLQQLRMGISVAQSDLLNQRGDQAQAYDHLAPALQADPEATSPKLALARLYNGHGKPGKALEIDLAVLRHNPQDLDARQAAVQAAVNSNHNSLATRLAMDGVQESPMDARAWLAMAVADQADGHGQRTIEDLRRAYDLRLQQVEGTRAASGPVGAHEEALAPPSTNPFQSRGYGHQVELGAPVTGGSYSAEAASPDTSDQMLSSIAGQIHTLRENLAPSIDGGLGFRSRSGEHGMGRLTEANIPIVGRLPLQAGASALTFSITPTMIWSGQLNTGSVYDVPRYGTFMATQAANQCAGHSSCGGLDFLSANHTQRIAAGAGEAGFAPDVQFGNSWVRADVCASPIGFPITNVLGGVEFSPRVGPVTFRVSAERRSITNSVLSYGGLRDPNYNSEVGRYARQVYGHDLTKQWGSEWGGVVTNHFHGQVEATLGNTILYGGGGYAIQTGKNVQRNSEREAGIGANTLVWHNANMLVRIGVSLTYFGYAHNEDFYTYGQGGYFSPQSYYAATVPVRYAGQHKRLDWDVTGSVGYQVFHEHAAPFFPTSSLLQSGANYVASNFVQNALPTDYLSQETVNSAYYPGDSIAGLTGGFNARVGYRFTRNVRLDLSGRYQKAGNWTESGAMISAHYLIMDQ.

An N-terminal signal peptide occupies residues 1-30 (MNRRYALSLSGALLASSCMTVLVAVPVARA). TPR repeat units follow at residues 49–82 (RQIL…APDA), 291–324 (AGLA…NSHD), 325–358 (ADSL…DPKT), 405–438 (TGAT…EPNN), 557–590 (NDAM…KQDL), and 701–734 (MGIS…DPEA). The disordered stretch occupies residues 841-867 (RAASGPVGAHEEALAPPSTNPFQSRGY).

The protein belongs to the AcsC/BcsC family.

Its subcellular location is the cell outer membrane. Its pathway is glycan metabolism; bacterial cellulose biosynthesis. In terms of biological role, required for maximal bacterial cellulose synthesis. It may be involved in the formation of a membrane complex for extrusion of the cellulose product. This Komagataeibacter sucrofermentans (strain ATCC 700178 / DSM 15973 / CECT 7291 / JCM 9730 / LMG 18788 / BPR 2001) (Acetobacter xylinus subsp. sucrofermentans) protein is Cellulose synthase operon protein C (bcsC).